A 342-amino-acid polypeptide reads, in one-letter code: Ferredoxin--NADP reductase (342 aa).

Residues cysteine 17, aspartate 36, glutamine 44, tyrosine 49, valine 89, phenylalanine 124, aspartate 289, and threonine 330 each contribute to the FAD site.

This sequence belongs to the ferredoxin--NADP reductase type 2 family. Homodimer. The cofactor is FAD.

The catalysed reaction is 2 reduced [2Fe-2S]-[ferredoxin] + NADP(+) + H(+) = 2 oxidized [2Fe-2S]-[ferredoxin] + NADPH. The protein is Ferredoxin--NADP reductase of Nitrobacter winogradskyi (strain ATCC 25391 / DSM 10237 / CIP 104748 / NCIMB 11846 / Nb-255).